A 105-amino-acid polypeptide reads, in one-letter code: Membrane-stabilizing protein A (105 aa).

A helical membrane pass occupies residues 1–21 (MQFYLILLAILYLIVSFISIF). Topologically, residues 22-29 (KMEVVFTR) are cytoplasmic. Residues 30-50 (ILRIIMGVLLLFVLALTTMSF) form a helical membrane-spanning segment. The Extracellular portion of the chain corresponds to 51–55 (PKENW). The helical transmembrane segment at 56–76 (WVFIVLLLLVGNVEVTGFKML) threads the bilayer. Residues 77–84 (KKDLKGVN) are Cytoplasmic-facing. Residues 85-105 (ILNLMSLFIFVIYFILTIVLF) form a helical membrane-spanning segment.

It belongs to the MspA family.

The protein localises to the membrane. Its function is as follows. Plays a role in toxin production, resistance to host innate immune mechanisms, and iron homeostasis. This is Membrane-stabilizing protein A from Staphylococcus aureus (strain NCTC 8325 / PS 47).